The following is a 932-amino-acid chain: MTDYKATLNLPQTSFAMKANLAQREPGMLKQWQQSKLYEQIREARKGREQFILHDGPPYANGDIHIGHAVNKILKDIIIKAKTLSGFDAPYVPGWDCHGLPIEHNVEKKVGKAGVKIDHVAFRQKCRDYARKQVEGQKKDFIRLGVLGEWDTPYLTMDFKTEADTVRALGKIVENGHLHKGFKPVYWSVVGASALAEAEVEYQDKTSFAIDVCFGVADVEDFAARVGSVAGTGNISVVIWTTTPWTLPANQAVSVNGELDYVVVQHGEQRLVLAEALVESVAKRLGVEELATVATFKGAAIEGLKLNHPFYAKQVPVLLGDHVTTDAGTGCVHTAPDHGADDFVVSNKYGIETLNYVDENGIYRDNVEIFAGDHVYKVDEKVIGLLEENGRLLHQAKLVHSFPHCWRTKTPLIFRATPQWFVSMTKNNLLKDVKQAVEGVNWVPDWGRARIDSMLDSSPDWCISRQRTWGVPITLFVHKETQELHPNTAALVEDVAKRIEEKGMDAWFELDAVELLGDEADQYQKVTDTLDVWFDSGVTHYSVVNARENLRYPADLYLEGSDQHRGWFQSSLKTSMAINGSAPYKQVLTHGFTVDADGKKMSKSIGNTVSPQKVMNDLGADVLRLWVAATDFSGDMSVSDEILKRTADSYRRIRNTARFFLSNLTGFNPQTDLLPAEEMLSLDRWAVDRAAALQADILKSYDTYQLHQIYQKLHNFCVVEMGGFYLDIIKDRQYTTKETSHARRSAQSALYHIVEAFVRWIAPICSFTADEIWQAMPGEKTGTVFTAEWYNLPRLAEGAELGNSYWQFIAKVKTAVNKTIEAKRSAGEVGGSLAAEVTLYCSESVAQKLTLLKDELRFVLICSSVTVVAASETEGEATEVEGLRVAVAKSSHEKCARCWHHREDVGQNTAHPEICGRCVENIDGEGESREFA.

The 'HIGH' region motif lies at 58-68; the sequence is PYANGDIHIGH. Position 559 (glutamate 559) interacts with L-isoleucyl-5'-AMP. A 'KMSKS' region motif is present at residues 600 to 604; that stretch reads KMSKS. Lysine 603 lines the ATP pocket. Zn(2+) contacts are provided by cysteine 895, cysteine 898, cysteine 915, and cysteine 918.

It belongs to the class-I aminoacyl-tRNA synthetase family. IleS type 1 subfamily. Monomer. The cofactor is Zn(2+).

It is found in the cytoplasm. It carries out the reaction tRNA(Ile) + L-isoleucine + ATP = L-isoleucyl-tRNA(Ile) + AMP + diphosphate. Its function is as follows. Catalyzes the attachment of isoleucine to tRNA(Ile). As IleRS can inadvertently accommodate and process structurally similar amino acids such as valine, to avoid such errors it has two additional distinct tRNA(Ile)-dependent editing activities. One activity is designated as 'pretransfer' editing and involves the hydrolysis of activated Val-AMP. The other activity is designated 'posttransfer' editing and involves deacylation of mischarged Val-tRNA(Ile). This Saccharophagus degradans (strain 2-40 / ATCC 43961 / DSM 17024) protein is Isoleucine--tRNA ligase.